A 281-amino-acid chain; its full sequence is MPADIMEKNSSSPVAATPASVNTTPDKPKTASEHRKSSKPIMEKRRRARINESLSQLKTLILDALKKDSSRHSKLEKADILEMTVKHLRNLQRAQMTAALSTDPSVLGKYRAGFSECMNEVTRFLSTCEGVNTEVRTRLLGHLANCMTQINAMTYPGQAHPALQAPPPPPPSGPGGPQHAPFAPPPPLVPIPGGAAPPPGSAPCKLGSQAGEAAKVFGGFQVVPAPDGQFAFLIPNGAFAHSGPVIPVYTSNSGTSVGPNAVSPSSGSSLTADSMWRPWRN.

The interval 1–44 is disordered; that stretch reads MPADIMEKNSSSPVAATPASVNTTPDKPKTASEHRKSSKPIMEK. The span at 10 to 21 shows a compositional bias: low complexity; that stretch reads SSSPVAATPASV. The span at 26–35 shows a compositional bias: basic and acidic residues; the sequence is DKPKTASEHR. The region spanning 34 to 91 is the bHLH domain; sequence HRKSSKPIMEKRRRARINESLSQLKTLILDALKKDSSRHSKLEKADILEMTVKHLRNL. Positions 110–143 constitute an Orange domain; the sequence is YRAGFSECMNEVTRFLSTCEGVNTEVRTRLLGHL. Disordered stretches follow at residues 158–206 and 255–281; these read QAHP…PCKL and TSVGPNAVSPSSGSSLTADSMWRPWRN. 2 stretches are compositionally biased toward pro residues: residues 164 to 174 and 182 to 201; these read QAPPPPPPSGP and FAPPPPLVPIPGGAAPPPGS. Residues 255 to 272 show a composition bias toward polar residues; the sequence is TSVGPNAVSPSSGSSLTA. A WRPW motif motif is present at residues 276–279; the sequence is WRPW.

In terms of assembly, interacts with SIRT1. Interacts weakly with TLE2. Interacts with HES6. Transcription repression requires formation of a complex with a corepressor protein of the Groucho/TLE family. Interacts (via WPRW motif) with TLE1. Interacts with an FA complex, composed of FANCA, FANCF, FANCG and FANCL, but not of FANCC, nor FANCE. As to expression, present in all tissues examined but highest in epithelial cells and in mesoderm-derived tissues such as embryonal muscle cells.

The protein localises to the nucleus. In terms of biological role, transcriptional repressor of genes that require a bHLH protein for their transcription. May act as a negative regulator of myogenesis by inhibiting the functions of MYOD1 and ASH1. Binds DNA on N-box motifs: 5'-CACNAG-3' with high affinity and on E-box motifs: 5'-CANNTG-3' with low affinity. May play a role in a functional FA core complex response to DNA cross-link damage, being required for the stability and nuclear localization of FA core complex proteins, as well as for FANCD2 monoubiquitination in response to DNA damage. The protein is Transcription factor HES-1 (Hes1) of Rattus norvegicus (Rat).